A 48-amino-acid chain; its full sequence is Sperm protamine P1 (48 aa).

Belongs to the protamine P1 family. Testis.

It localises to the nucleus. The protein resides in the chromosome. Functionally, protamines substitute for histones in the chromatin of sperm during the haploid phase of spermatogenesis. They compact sperm DNA into a highly condensed, stable and inactive complex. This is Sperm protamine P1 (PRM1) from Monophyllus redmani (Greater Antillean long-tongued bat).